Reading from the N-terminus, the 88-residue chain is Small ribosomal subunit protein bS20 (88 aa).

This sequence belongs to the bacterial ribosomal protein bS20 family.

Its function is as follows. Binds directly to 16S ribosomal RNA. The sequence is that of Small ribosomal subunit protein bS20 from Bacillus licheniformis (strain ATCC 14580 / DSM 13 / JCM 2505 / CCUG 7422 / NBRC 12200 / NCIMB 9375 / NCTC 10341 / NRRL NRS-1264 / Gibson 46).